A 347-amino-acid chain; its full sequence is GMP reductase (347 aa).

108–131 (ADFEKTVQILALNPALNFVCIDVA) serves as a coordination point for NADP(+). Gly181 and Gly183 together coordinate K(+). Cys186 acts as the Thioimidate intermediate in catalysis. 216–239 (IVSDGGCTMPGDVAKAFGGGADFV) serves as a coordination point for NADP(+).

It belongs to the IMPDH/GMPR family. GuaC type 1 subfamily. In terms of assembly, homotetramer.

It carries out the reaction IMP + NH4(+) + NADP(+) = GMP + NADPH + 2 H(+). Functionally, catalyzes the irreversible NADPH-dependent deamination of GMP to IMP. It functions in the conversion of nucleobase, nucleoside and nucleotide derivatives of G to A nucleotides, and in maintaining the intracellular balance of A and G nucleotides. The protein is GMP reductase of Salmonella choleraesuis (strain SC-B67).